Here is a 146-residue protein sequence, read N- to C-terminus: Snaclec 5 (146 aa).

Positions 1 to 23 (MGRFIFISFGLLVVFLSLSGTEA) are cleaved as a signal peptide. 3 cysteine pairs are disulfide-bonded: cysteine 25–cysteine 36, cysteine 53–cysteine 142, and cysteine 119–cysteine 134. A C-type lectin domain is found at 32–143 (YEGHCYRVFD…CRNYGHFVCK (112 aa)).

This sequence belongs to the snaclec family. Heterodimer; disulfide-linked. Expressed by the venom gland.

Its subcellular location is the secreted. In terms of biological role, interferes with one step of hemostasis (modulation of platelet aggregation, or coagulation cascade, for example). This Echis pyramidum leakeyi (Leakey's carpet viper) protein is Snaclec 5.